The primary structure comprises 575 residues: Alpha-(1,6)-fucosyltransferase (575 aa).

Over 1–9 (MRPWTGSWR) the chain is Cytoplasmic. A helical; Signal-anchor for type II membrane protein transmembrane segment spans residues 10–30 (WIMLILFAWGTLLFYIGGHLV). Over 31–575 (RDNDHPDHSS…KVPHVPEAEK (545 aa)) the chain is Lumenal. Intrachain disulfides connect cysteine 204–cysteine 266, cysteine 212–cysteine 230, and cysteine 218–cysteine 222. The GT23 domain occupies 206–493 (KAKKLVCNIN…PDASANFHSL (288 aa)). Phosphoserine is present on serine 278. Positions 299–305 (PRPPYLP) match the SH3-binding motif. The interval 365 to 366 (RR) is important for donor substrate binding. Cysteines 465 and 472 form a disulfide. Residues 502–563 (QNAHNQIAIY…PSYKVREKIE (62 aa)) form the SH3 domain.

The protein belongs to the glycosyltransferase 23 family. In terms of processing, tyrosine phosphorylated by PKDCC/VLK. As to expression, highest expression found in brain. Also found in heart, lung, spleen and kidney.

It is found in the golgi apparatus. The protein resides in the golgi stack membrane. The enzyme catalyses N(4)-{beta-D-GlcNAc-(1-&gt;2)-alpha-D-Man-(1-&gt;3)-[beta-D-GlcNAc-(1-&gt;2)-alpha-D-Man-(1-&gt;6)]-beta-D-Man-(1-&gt;4)-beta-D-GlcNAc-(1-&gt;4)-beta-D-GlcNAc}-L-asparaginyl-[protein] + GDP-beta-L-fucose = an N(4)-{beta-D-GlcNAc-(1-&gt;2)-alpha-D-Man-(1-&gt;3)-[beta-D-GlcNAc-(1-&gt;2)-alpha-D-Man-(1-&gt;6)]-beta-D-Man-(1-&gt;4)-beta-D-GlcNAc-(1-&gt;4)-[alpha-L-Fuc-(1-&gt;6)]-beta-D-GlcNAc}-L-asparaginyl-[protein] + GDP + H(+). It participates in protein modification; protein glycosylation. In terms of biological role, catalyzes the addition of fucose in alpha 1-6 linkage to the first GlcNAc residue, next to the peptide chains in N-glycans. This is Alpha-(1,6)-fucosyltransferase (FUT8) from Bos taurus (Bovine).